The primary structure comprises 212 residues: GrpE protein homolog, mitochondrial (212 aa).

The protein belongs to the GrpE family. As to quaternary structure, component of the PAM complex, at least composed of mtHsp70, MGE1, TIM44, PAM16, PAM17 and PAM18.

It is found in the mitochondrion matrix. In terms of biological role, essential component of the PAM complex, a complex required for the translocation of transit peptide-containing proteins from the inner membrane into the mitochondrial matrix in an ATP-dependent manner. Seems to control the nucleotide-dependent binding of SSC1 to substrate proteins. This is GrpE protein homolog, mitochondrial (mge1) from Eremothecium gossypii (strain ATCC 10895 / CBS 109.51 / FGSC 9923 / NRRL Y-1056) (Yeast).